The chain runs to 146 residues: Small ribosomal subunit protein uS13 (146 aa).

The disordered stretch occupies residues 119 to 146 (ARGKKVRGQRTRSTGRKGRTVGVVRRKR).

This sequence belongs to the universal ribosomal protein uS13 family. In terms of assembly, part of the 30S ribosomal subunit. Forms a loose heterodimer with protein S19. Forms two bridges to the 50S subunit in the 70S ribosome.

Its function is as follows. Located at the top of the head of the 30S subunit, it contacts several helices of the 16S rRNA. In the 70S ribosome it contacts the 23S rRNA (bridge B1a) and protein L5 of the 50S subunit (bridge B1b), connecting the 2 subunits; these bridges are implicated in subunit movement. This is Small ribosomal subunit protein uS13 from Archaeoglobus fulgidus (strain ATCC 49558 / DSM 4304 / JCM 9628 / NBRC 100126 / VC-16).